Reading from the N-terminus, the 524-residue chain is Secologanin synthase 1 (524 aa).

Residues 1–11 (MEMDMDTIRKA) lie on the Lumenal side of the membrane. A helical transmembrane segment spans residues 12-32 (IAATIFALVMAWAWRVLDWAW). The Cytoplasmic segment spans residues 33–524 (FTPKRIEKRL…SHVIYKKLES (492 aa)). Heme is bound at residue Cys-470.

The protein belongs to the cytochrome P450 family. It depends on heme as a cofactor. As to expression, upper and lower leaf epidermis.

The protein localises to the endoplasmic reticulum membrane. The catalysed reaction is loganin + reduced [NADPH--hemoprotein reductase] + O2 = secologanin + oxidized [NADPH--hemoprotein reductase] + 2 H2O + H(+). It catalyses the reaction secologanin + reduced [NADPH--hemoprotein reductase] + O2 = secoxyloganin + oxidized [NADPH--hemoprotein reductase] + H2O + 2 H(+). Its pathway is alkaloid biosynthesis; secologanin biosynthesis. In terms of biological role, component of the seco-iridoid and derivatives monoterpenoid indole alkaloids (MIAs, e.g. secologanin) biosynthesis pathway. Catalyzes the conversion of loganin into secologanin. Catalyzes the conversion of secologanin into secoxyloganin. In Catharanthus roseus (Madagascar periwinkle), this protein is Secologanin synthase 1.